Here is a 425-residue protein sequence, read N- to C-terminus: 3-phosphoshikimate 1-carboxyvinyltransferase (425 aa).

Residues Lys20, Ser21, and Arg25 each coordinate 3-phosphoshikimate. Lys20 contacts phosphoenolpyruvate. The phosphoenolpyruvate site is built by Gly92 and Arg120. Residues Ser165, Gln167, Asp312, and Lys339 each coordinate 3-phosphoshikimate. Gln167 contacts phosphoenolpyruvate. The Proton acceptor role is filled by Asp312. Phosphoenolpyruvate contacts are provided by Arg343 and Arg385.

It belongs to the EPSP synthase family. Monomer.

It localises to the cytoplasm. The enzyme catalyses 3-phosphoshikimate + phosphoenolpyruvate = 5-O-(1-carboxyvinyl)-3-phosphoshikimate + phosphate. Its pathway is metabolic intermediate biosynthesis; chorismate biosynthesis; chorismate from D-erythrose 4-phosphate and phosphoenolpyruvate: step 6/7. Functionally, catalyzes the transfer of the enolpyruvyl moiety of phosphoenolpyruvate (PEP) to the 5-hydroxyl of shikimate-3-phosphate (S3P) to produce enolpyruvyl shikimate-3-phosphate and inorganic phosphate. The sequence is that of 3-phosphoshikimate 1-carboxyvinyltransferase from Alkaliphilus metalliredigens (strain QYMF).